A 222-amino-acid chain; its full sequence is Interleukin-12 subunit alpha (222 aa).

Positions Met1–Ala25 are cleaved as a signal peptide. Cystine bridges form between Cys40-Cys113, Cys67-Cys199, and Cys88-Cys126. Residues Asn96 and Asn174 are each glycosylated (N-linked (GlcNAc...) asparagine).

Belongs to the IL-6 superfamily. In terms of assembly, heterodimer with IL12B; disulfide-linked. This heterodimer is known as interleukin IL-12. Heterodimer with EBI3/IL27B; not disulfide-linked. This heterodimer is known as interleukin IL-35. Interacts with NBR1; this interaction promotes IL-12 secretion.

It is found in the secreted. Functionally, heterodimerizes with IL12B to form the IL-12 cytokine or with EBI3/IL27B to form the IL-35 cytokine. IL-12 is primarily produced by professional antigen-presenting cells (APCs) such as B-cells and dendritic cells (DCs) as well as macrophages and granulocytes and regulates T-cell and natural killer-cell responses, induces the production of interferon-gamma (IFN-gamma), favors the differentiation of T-helper 1 (Th1) cells and is an important link between innate resistance and adaptive immunity. Mechanistically, exerts its biological effects through a receptor composed of IL12R1 and IL12R2 subunits. Binding to the receptor results in the rapid tyrosine phosphorylation of a number of cellular substrates including the JAK family kinases TYK2 and JAK2. In turn, recruited STAT4 gets phosphorylated and translocates to the nucleus where it regulates cytokine/growth factor responsive genes. As part of IL-35, plays essential roles in maintaining the immune homeostasis of the liver microenvironment and also functions as an immune-suppressive cytokine. Mediates biological events through unconventional receptors composed of IL12RB2 and gp130/IL6ST heterodimers or homodimers. Signaling requires the transcription factors STAT1 and STAT4, which form a unique heterodimer that binds to distinct DNA sites. The polypeptide is Interleukin-12 subunit alpha (IL12A) (Lama glama (Llama)).